The primary structure comprises 376 residues: Glutamate 5-kinase (376 aa).

Residue Lys15 participates in ATP binding. The substrate site is built by Ser56, Asp143, and Asn155. Residue 175-176 (SD) coordinates ATP. One can recognise a PUA domain in the interval 281 to 358 (KGTLTIDAGA…PDVMSILGVS (78 aa)).

This sequence belongs to the glutamate 5-kinase family.

The protein localises to the cytoplasm. It carries out the reaction L-glutamate + ATP = L-glutamyl 5-phosphate + ADP. It functions in the pathway amino-acid biosynthesis; L-proline biosynthesis; L-glutamate 5-semialdehyde from L-glutamate: step 1/2. In terms of biological role, catalyzes the transfer of a phosphate group to glutamate to form L-glutamate 5-phosphate. In Rhodopseudomonas palustris (strain HaA2), this protein is Glutamate 5-kinase.